The sequence spans 624 residues: MDSHCDCAEPPAAEQPSGKINKTAFKLFKRRKSGGTMPSIFGVRSKGGEGKGASKTGMVRSRTHDGLADAVLESGKKEDAGGGEAQGKDAPSRAAGGLGGSASSSVAKSHSFFSLLRKNGRPENGKAAENAEQRAGGRQKKGLKGIFSSMRWHRKDKIGKEERGEASEIPSGLIMPGSLTASLECIKEETPKPLSETPNGAGDTGVESQQEKRGGDACVSAEEPQAGGGESRDSKTPPGEDPAAAARRLEELCGERPDPGAGEVGTAKDAAITGDIPITTIPPVEPHCDSGQETAAAPDPSSVDPPSEQSIDRICLMFADVTSLKSFDSLTGCGDIIADQEEDVGGGSGGCEKSTPGAGKLGAPKKHPTMVAYQGGGEEMASPDQVDDTYLQEFWDMLSQTEETETGGGGGGGGGTKTPEGLKENRGTEGAQNRVAVKRGGLNQIPIHLNNKEEQKGREKEQHEGVPNSDEGYWDSTTPGPEEDSTTSIQKETLPRDSYSGDALYDLYAEPDENPPGGPPEEEVTCMPRSKPVSPITTTCSLKTPSSTVKDSKIPISIKHLASHPASHGTDTSNSHHVAHHHLAKSEMHRTKIPVSKVLVRRVSNRGLAGTTVKAATHQDSAKK.

2 disordered regions span residues 1-308 and 342-596; these read MDSH…PPSE and EDVG…IPVS. Residues 74 to 91 show a composition bias toward basic and acidic residues; sequence SGKKEDAGGGEAQGKDAP. Residues 101 to 111 show a composition bias toward low complexity; it reads SASSSVAKSHS. Basic and acidic residues-rich tracts occupy residues 120 to 132 and 247 to 258; these read GRPE…ENAE and RRLEELCGERPD. Composition is skewed to low complexity over residues 272 to 282 and 295 to 307; these read ITGDIPITTIP and AAAP…DPPS. The span at 406-416 shows a compositional bias: gly residues; sequence TGGGGGGGGGT. The segment covering 450–464 has biased composition (basic and acidic residues); it reads NNKEEQKGREKEQHE. Polar residues predominate over residues 535-549; that stretch reads PITTTCSLKTPSSTV.

This sequence belongs to the Amer family.

It is found in the cell membrane. Its function is as follows. Negative regulator of the canonical Wnt signaling pathway involved in neuroectodermal patterning. Acts by specifically binding phosphatidylinositol 4,5-bisphosphate (PtdIns(4,5)P2), translocating to the cell membrane and interacting with key regulators of the canonical Wnt signaling pathway, such as components of the beta-catenin destruction complex. This is APC membrane recruitment protein 2 (AMER2) from Gallus gallus (Chicken).